We begin with the raw amino-acid sequence, 147 residues long: Hemoglobin subunit epsilon (147 aa).

In terms of domain architecture, Globin spans 3–147 (HWSAEEKQLI…VAHALPRKYH (145 aa)). H64 and H93 together coordinate heme b.

Belongs to the globin family. As to quaternary structure, heterotetramer of two epsilon chains and two alpha chains. Red blood cells.

In terms of biological role, beta-type chain found in early embryos. This is Hemoglobin subunit epsilon (HBE) from Cairina moschata (Muscovy duck).